A 245-amino-acid chain; its full sequence is Orotidine 5'-phosphate decarboxylase (245 aa).

Residues Asp-22, Lys-44, 71–80 (DLKFHDIPNT), Thr-131, Arg-192, Gln-201, Gly-221, and Arg-222 contribute to the substrate site. Catalysis depends on Lys-73, which acts as the Proton donor.

Belongs to the OMP decarboxylase family. Type 1 subfamily. As to quaternary structure, homodimer.

The catalysed reaction is orotidine 5'-phosphate + H(+) = UMP + CO2. It functions in the pathway pyrimidine metabolism; UMP biosynthesis via de novo pathway; UMP from orotate: step 2/2. Catalyzes the decarboxylation of orotidine 5'-monophosphate (OMP) to uridine 5'-monophosphate (UMP). In Shigella boydii serotype 18 (strain CDC 3083-94 / BS512), this protein is Orotidine 5'-phosphate decarboxylase.